We begin with the raw amino-acid sequence, 139 residues long: Iron-sulfur cluster assembly 1 homolog, mitochondrial (139 aa).

Positions 52, 117, and 119 each coordinate Fe cation.

The protein belongs to the HesB/IscA family.

Its subcellular location is the mitochondrion. In terms of biological role, involved in the assembly of mitochondrial iron-sulfur proteins. Probably involved in the binding of an intermediate of Fe/S cluster assembly. The polypeptide is Iron-sulfur cluster assembly 1 homolog, mitochondrial (isca1) (Dictyostelium discoideum (Social amoeba)).